The primary structure comprises 205 residues: Delta-aminolevulinic acid dehydratase (205 aa).

3 residues coordinate Zn(2+): Cys-117, Cys-119, and Cys-127. The active-site Schiff-base intermediate with substrate is Lys-192. Arg-202 provides a ligand contact to substrate.

Belongs to the ALAD family. As to quaternary structure, homooctamer. Requires Zn(2+) as cofactor.

The enzyme catalyses 2 5-aminolevulinate = porphobilinogen + 2 H2O + H(+). It participates in porphyrin-containing compound metabolism; protoporphyrin-IX biosynthesis; coproporphyrinogen-III from 5-aminolevulinate: step 1/4. Functionally, catalyzes an early step in the biosynthesis of tetrapyrroles. Binds two molecules of 5-aminolevulinate per subunit, each at a distinct site, and catalyzes their condensation to form porphobilinogen. In Ruminiclostridium josui (Clostridium josui), this protein is Delta-aminolevulinic acid dehydratase (hemB).